Reading from the N-terminus, the 185-residue chain is Ribosome-recycling factor (185 aa).

The tract at residues 136–159 (NEQLKSQQKDGKMSEDELKRSQDE) is disordered.

This sequence belongs to the RRF family.

It localises to the cytoplasm. Its function is as follows. Responsible for the release of ribosomes from messenger RNA at the termination of protein biosynthesis. May increase the efficiency of translation by recycling ribosomes from one round of translation to another. The protein is Ribosome-recycling factor of Pelotomaculum thermopropionicum (strain DSM 13744 / JCM 10971 / SI).